The following is a 335-amino-acid chain: Solute-binding protein Veis_3954 (335 aa).

A signal peptide spans 1 to 34 (MPSTRPLPRPSSRSLRRLALGLGLAFGLGATAAA). (R)-pantoate is bound by residues glutamine 50, glutamate 82, 155–158 (NGFR), arginine 179, and asparagine 219.

This sequence belongs to the bacterial solute-binding protein 7 family. In terms of assembly, the complex is comprised of an extracytoplasmic solute-binding protein and a heteromeric permease formed by two transmembrane proteins.

It localises to the periplasm. Solute-binding protein that binds (R)-pantoate and D-erythronate (in vitro). Probably part of a tripartite ATP-independent periplasmic (TRAP) transport system that mediates solute transport into the cytoplasm. The polypeptide is Solute-binding protein Veis_3954 (Verminephrobacter eiseniae (strain EF01-2)).